The sequence spans 59 residues: Large ribosomal subunit protein bL32 (59 aa).

Residues 1–16 are compositionally biased toward basic residues; it reads MAVPKRKVSPHRRGNR. The interval 1–20 is disordered; the sequence is MAVPKRKVSPHRRGNRRAHD.

This sequence belongs to the bacterial ribosomal protein bL32 family.

This Erythrobacter litoralis (strain HTCC2594) protein is Large ribosomal subunit protein bL32.